A 316-amino-acid chain; its full sequence is Beta-ketoacyl-[acyl-carrier-protein] synthase III (316 aa).

Active-site residues include Cys-112 and His-243. Residues 244–248 (QANLR) are ACP-binding. Residue Asn-273 is part of the active site.

The protein belongs to the thiolase-like superfamily. FabH family. As to quaternary structure, homodimer.

The protein resides in the cytoplasm. It catalyses the reaction malonyl-[ACP] + acetyl-CoA + H(+) = 3-oxobutanoyl-[ACP] + CO2 + CoA. The protein operates within lipid metabolism; fatty acid biosynthesis. Catalyzes the condensation reaction of fatty acid synthesis by the addition to an acyl acceptor of two carbons from malonyl-ACP. Catalyzes the first condensation reaction which initiates fatty acid synthesis and may therefore play a role in governing the total rate of fatty acid production. Possesses both acetoacetyl-ACP synthase and acetyl transacylase activities. Its substrate specificity determines the biosynthesis of branched-chain and/or straight-chain of fatty acids. The sequence is that of Beta-ketoacyl-[acyl-carrier-protein] synthase III from Yersinia pseudotuberculosis serotype O:1b (strain IP 31758).